Consider the following 401-residue polypeptide: Phosrestin-1 (401 aa).

The protein belongs to the arrestin family.

In terms of biological role, directly interacts with light-activated rhodopsin thereby activating the phosphorylation of metarhodopsin. Inhibits the dephosphorylation of metarhodopsin. This is Phosrestin-1 (ARR2) from Calliphora vicina (Blue blowfly).